A 374-amino-acid polypeptide reads, in one-letter code: Protein RecA (374 aa).

Residue 66–73 (GPESSGKT) coordinates ATP. The disordered stretch occupies residues 327 to 374 (LGVGVHPEESATEPGADAASAAPADAAPAVPAPTTAKATKSKAAAAKS). Low complexity predominate over residues 338 to 374 (TEPGADAASAAPADAAPAVPAPTTAKATKSKAAAAKS).

It belongs to the RecA family.

The protein resides in the cytoplasm. Functionally, can catalyze the hydrolysis of ATP in the presence of single-stranded DNA, the ATP-dependent uptake of single-stranded DNA by duplex DNA, and the ATP-dependent hybridization of homologous single-stranded DNAs. It interacts with LexA causing its activation and leading to its autocatalytic cleavage. The protein is Protein RecA of Streptomyces lividans.